Consider the following 218-residue polypeptide: Cytochrome b6 (218 aa).

A helical membrane pass occupies residues 35 to 55 (IFYCLGGITLVCFLIQFATGF). Residue Cys-38 participates in heme c binding. Heme b-binding residues include His-89 and His-103. The next 3 membrane-spanning stretches (helical) occupy residues 93–113 (ASMM…TGGF), 119–139 (LTWV…VTGY), and 189–209 (LHTF…FLMI). Positions 190 and 205 each coordinate heme b.

The protein belongs to the cytochrome b family. PetB subfamily. The 4 large subunits of the cytochrome b6-f complex are cytochrome b6, subunit IV (17 kDa polypeptide, PetD), cytochrome f and the Rieske protein, while the 4 small subunits are PetG, PetL, PetM and PetN. The complex functions as a dimer. Heme b is required as a cofactor. Heme c serves as cofactor.

The protein resides in the cellular thylakoid membrane. Its function is as follows. Component of the cytochrome b6-f complex, which mediates electron transfer between photosystem II (PSII) and photosystem I (PSI), cyclic electron flow around PSI, and state transitions. The sequence is that of Cytochrome b6 from Parasynechococcus marenigrum (strain WH8102).